A 303-amino-acid chain; its full sequence is Ornithine carbamoyltransferase (303 aa).

Carbamoyl phosphate-binding positions include 52 to 55 (STRT), Gln-79, Arg-103, and 130 to 133 (HPCQ). L-ornithine is bound by residues Asn-161, Asp-221, and 225 to 226 (SM). Carbamoyl phosphate-binding positions include 260 to 261 (CL) and Arg-288.

It belongs to the aspartate/ornithine carbamoyltransferase superfamily. OTCase family.

Its subcellular location is the cytoplasm. The enzyme catalyses carbamoyl phosphate + L-ornithine = L-citrulline + phosphate + H(+). The protein operates within amino-acid biosynthesis; L-arginine biosynthesis; L-arginine from L-ornithine and carbamoyl phosphate: step 1/3. Reversibly catalyzes the transfer of the carbamoyl group from carbamoyl phosphate (CP) to the N(epsilon) atom of ornithine (ORN) to produce L-citrulline. This chain is Ornithine carbamoyltransferase (argF), found in Rhizobium meliloti (strain 1021) (Ensifer meliloti).